The sequence spans 948 residues: Protocadherin alpha-2 (948 aa).

An N-terminal signal peptide occupies residues 1–22; it reads MASSIRRGRGAWTRLLSLLLLA. Residues 23–697 are Extracellular-facing; it reads AWEVGSGQLR…GSEATLVDVN (675 aa). Cadherin domains lie at 30–133, 157–242, 243–350, 351–455, 456–565, and 588–678; these read QLRY…PPIF, ASDA…EPTF, AQSV…TPEV, SITS…APAF, AQPE…APAL, and GHVV…APKA. N257, N265, N362, and N548 each carry an N-linked (GlcNAc...) asparagine glycan. The chain crosses the membrane as a helical span at residues 698-718; it reads VYLIIAICAVSSLLVLTVLLY. Residues 719–948 lie on the Cytoplasmic side of the membrane; that stretch reads TALRCSVPPT…GNSTTDNSDQ (230 aa). The stretch at 734 to 737 is one PXXP 1 repeat; it reads PGKP. The tract at residues 734–892 is 5 X 4 AA repeats of P-X-X-P; that stretch reads PGKPTLVCSS…PDKFIIPGSP (159 aa). Disordered regions lie at residues 754 to 801, 829 to 854, and 868 to 948; these read RRQR…RQPN, GPGG…EVSP, and KYGP…NSDQ. Positions 783 to 795 are enriched in basic and acidic residues; it reads AEEKQLSESEYVG. PXXP repeat units lie at residues 797–800, 830–833, 871–874, and 889–892; these read PRQP, PGGP, PGNP, and PGSP. A compositionally biased stretch (basic and acidic residues) spans 907-921; that stretch reads DKSDFITFGKKEETK.

The protein resides in the cell membrane. Potential calcium-dependent cell-adhesion protein. May be involved in the establishment and maintenance of specific neuronal connections in the brain. This Homo sapiens (Human) protein is Protocadherin alpha-2 (PCDHA2).